The chain runs to 141 residues: Large ribosomal subunit protein uL11 (141 aa).

The protein belongs to the universal ribosomal protein uL11 family. Part of the ribosomal stalk of the 50S ribosomal subunit. Interacts with L10 and the large rRNA to form the base of the stalk. L10 forms an elongated spine to which L12 dimers bind in a sequential fashion forming a multimeric L10(L12)X complex. Post-translationally, one or more lysine residues are methylated.

Forms part of the ribosomal stalk which helps the ribosome interact with GTP-bound translation factors. This chain is Large ribosomal subunit protein uL11, found in Picosynechococcus sp. (strain ATCC 27264 / PCC 7002 / PR-6) (Agmenellum quadruplicatum).